A 178-amino-acid chain; its full sequence is MSVRKILRMGDSILRQVSIPVTENELQTKEFKKLIRDMFDTMRHAEGVGLAAPQIGILKQIVVVGSEDNERYPDTPNVPERVILNPIITPLTKDTSGFWEGCLSVPGMRGYVERPNKIRMQWMDEKGDRFDETIDGYKAVVYQHECDHLSGILYVDRLKDTKLFGFNDTLDSGRNVLD.

Cys-102 and His-144 together coordinate Fe cation. The active site involves Glu-145. Residue His-148 coordinates Fe cation.

It belongs to the polypeptide deformylase family. Fe(2+) is required as a cofactor.

The catalysed reaction is N-terminal N-formyl-L-methionyl-[peptide] + H2O = N-terminal L-methionyl-[peptide] + formate. In terms of biological role, removes the formyl group from the N-terminal Met of newly synthesized proteins. Requires at least a dipeptide for an efficient rate of reaction. N-terminal L-methionine is a prerequisite for activity but the enzyme has broad specificity at other positions. This chain is Peptide deformylase, found in Leptospira borgpetersenii serovar Hardjo-bovis (strain JB197).